A 585-amino-acid polypeptide reads, in one-letter code: Frizzled-5 (585 aa).

The signal sequence occupies residues 1–26 (MARPDPSAPPSLLLLLLAQLVGRAAA). Over 27–238 (ASKAPVCQEI…PDERTFATFW (212 aa)) the chain is Extracellular. One can recognise an FZ domain in the interval 28–150 (SKAPVCQEIT…GDAEVLCMDY (123 aa)). Cystine bridges form between C33–C94, C41–C87, C78–C116, C105–C147, and C109–C133. The N-linked (GlcNAc...) asparagine glycan is linked to N47. The N-linked (GlcNAc...) asparagine glycan is linked to N151. The interval 156 to 182 (TTASPKSFPAKPTLPGPPGAPSSGGEC) is disordered. Residues 239–259 (IGLWSVLCFISTSTTVATFLI) form a helical membrane-spanning segment. At 260-270 (DMERFRYPERP) the chain is on the cytoplasmic side. Residues 271–291 (IIFLSACYLCVSLGFLVRLVV) traverse the membrane as a helical segment. Over 292–315 (GHASVACSREHSHIHYETTGPALC) the chain is Extracellular. A helical membrane pass occupies residues 316–336 (TVVFLLVYFFGMASSIWWVIL). At 337 to 358 (SLTWFLAAGMKWGNEAIAGYAQ) the chain is on the cytoplasmic side. The helical transmembrane segment at 359 to 379 (YFHLAAWLIPSVKSITALALS) threads the bilayer. At 380–402 (SVDGDPVAGVCYVGNQNLNSLRG) the chain is on the extracellular side. Residues 403-423 (FVLGPLVLYLLVGTLFLLAGF) traverse the membrane as a helical segment. Residues 424 to 449 (VSLFRIRSVIKQGGTKTDKLEKLMIR) lie on the Cytoplasmic side of the membrane. A helical transmembrane segment spans residues 450-470 (IGIFTLLYTVPASIVVACYLY). Over 471 to 500 (EQHYRESWEAALTCACPGSDAGQPRAKPEY) the chain is Extracellular. A helical transmembrane segment spans residues 501–521 (WVLMLKYFMCLVVGITSGVWI). The Cytoplasmic segment spans residues 522–585 (WSGKTLESWR…YHKQVSLSHV (64 aa)). The short motif at 525 to 530 (KTLESW) is the Lys-Thr-X-X-X-Trp motif, mediates interaction with the PDZ domain of Dvl family members element. A PDZ-binding motif is present at residues 583 to 585 (SHV).

The protein belongs to the G-protein coupled receptor Fz/Smo family. In terms of assembly, binding of unsaturated fatty acid molecules (via FZ domain) promotes homodimerization (via FZ domain). Interacts with WNT2B. Interacts with WNT7A. Interacts with GOPC. Post-translationally, ubiquitinated by RNF43 and ZNRF3, leading to its degradation by the proteasome.

The protein resides in the cell membrane. The protein localises to the golgi apparatus membrane. It localises to the synapse. It is found in the perikaryon. Its subcellular location is the cell projection. The protein resides in the dendrite. The protein localises to the axon. Receptor for Wnt proteins. Functions in the canonical Wnt/beta-catenin signaling pathway. In vitro activates WNT2, WNT10B, WNT5A, but not WNT2B or WNT4 signaling. In neurons, activation by WNT7A promotes formation of synapses. May be involved in transduction and intercellular transmission of polarity information during tissue morphogenesis and/or in differentiated tissues. Plays a role in yolk sac angiogenesis and in placental vascularization. Plays a role in ocular development. The protein is Frizzled-5 (Fzd5) of Rattus norvegicus (Rat).